We begin with the raw amino-acid sequence, 446 residues long: Tubulin beta chain (446 aa).

GTP-binding residues include Q11, E69, S138, G142, T143, G144, N204, and N226. E69 provides a ligand contact to Mg(2+). The segment at 423-446 (QQYQDATADEEEGEYEEEPAEEEQ) is disordered. The segment covering 429-446 (TADEEEGEYEEEPAEEEQ) has biased composition (acidic residues).

This sequence belongs to the tubulin family. Dimer of alpha and beta chains. A typical microtubule is a hollow water-filled tube with an outer diameter of 25 nm and an inner diameter of 15 nM. Alpha-beta heterodimers associate head-to-tail to form protofilaments running lengthwise along the microtubule wall with the beta-tubulin subunit facing the microtubule plus end conferring a structural polarity. Microtubules usually have 13 protofilaments but different protofilament numbers can be found in some organisms and specialized cells. Mg(2+) serves as cofactor.

The protein localises to the cytoplasm. It is found in the cytoskeleton. Its function is as follows. Tubulin is the major constituent of microtubules, a cylinder consisting of laterally associated linear protofilaments composed of alpha- and beta-tubulin heterodimers. Microtubules grow by the addition of GTP-tubulin dimers to the microtubule end, where a stabilizing cap forms. Below the cap, tubulin dimers are in GDP-bound state, owing to GTPase activity of alpha-tubulin. This chain is Tubulin beta chain, found in Pleurotus sajor-caju (Oyster mushroom).